The following is a 319-amino-acid chain: Malate dehydrogenase (319 aa).

Residues 10-15 (GAGNIG) and Asp34 each bind NAD(+). Arg83 and Arg89 together coordinate substrate. Residues Asn96 and 119-121 (ITN) contribute to the NAD(+) site. Asn121 and Arg152 together coordinate substrate. Residue His176 is the Proton acceptor of the active site.

Belongs to the LDH/MDH superfamily. MDH type 3 family.

The catalysed reaction is (S)-malate + NAD(+) = oxaloacetate + NADH + H(+). In terms of biological role, catalyzes the reversible oxidation of malate to oxaloacetate. In Francisella tularensis subsp. holarctica (strain FTNF002-00 / FTA), this protein is Malate dehydrogenase.